The sequence spans 52 residues: Large ribosomal subunit protein eL39 (52 aa).

The protein belongs to the eukaryotic ribosomal protein eL39 family.

The protein is Large ribosomal subunit protein eL39 (RPL39) of Tetrahymena thermophila (strain SB210).